The chain runs to 245 residues: Fibroblast growth factor 13 (245 aa).

Disordered regions lie at residues 1–37 and 213–245; these read MAAA…SKGN and TEFS…NDST. Positions 1 to 62 are mediates targeting to the nucleus; the sequence is MAAAIASSLI…GSKKRRRRRP (62 aa). The span at 215–245 shows a compositional bias: polar residues; sequence FSRSGSGTPTKSRSVSGVLNGGKSMSQNDST.

It belongs to the heparin-binding growth factors family.

Its subcellular location is the cell projection. The protein resides in the filopodium. The protein localises to the growth cone. It is found in the dendrite. It localises to the cell membrane. Its subcellular location is the sarcolemma. The protein resides in the cytoplasm. Functionally, microtubule-binding protein which directly binds tubulin and is involved in both polymerization and stabilization of microtubules. Through its action on microtubules, may participate in the refinement of axons by negatively regulating axonal and leading processes branching. Plays a crucial role in neuron polarization and migration. Regulates voltage-gated sodium channel transport and function. Required for proper head development, it is involved in neural differentiation through regulation of the mek5-erk5 pathway. The sequence is that of Fibroblast growth factor 13 (fgf13) from Xenopus laevis (African clawed frog).